Here is a 549-residue protein sequence, read N- to C-terminus: Oxygen-dependent choline dehydrogenase (549 aa).

4-33 (DFVIIGSGSAGSAMASRLSEDGKHTVIVLE) contributes to the FAD binding site. Residue histidine 465 is the Proton acceptor of the active site.

It belongs to the GMC oxidoreductase family. FAD serves as cofactor.

The catalysed reaction is choline + A = betaine aldehyde + AH2. The enzyme catalyses betaine aldehyde + NAD(+) + H2O = glycine betaine + NADH + 2 H(+). The protein operates within amine and polyamine biosynthesis; betaine biosynthesis via choline pathway; betaine aldehyde from choline (cytochrome c reductase route): step 1/1. Its function is as follows. Involved in the biosynthesis of the osmoprotectant glycine betaine. Catalyzes the oxidation of choline to betaine aldehyde and betaine aldehyde to glycine betaine at the same rate. This is Oxygen-dependent choline dehydrogenase from Rhizobium rhizogenes (strain K84 / ATCC BAA-868) (Agrobacterium radiobacter).